Consider the following 407-residue polypeptide: Tryptophan synthase beta chain (407 aa).

Lys91 bears the N6-(pyridoxal phosphate)lysine mark.

Belongs to the TrpB family. In terms of assembly, tetramer of two alpha and two beta chains. The cofactor is pyridoxal 5'-phosphate.

It carries out the reaction (1S,2R)-1-C-(indol-3-yl)glycerol 3-phosphate + L-serine = D-glyceraldehyde 3-phosphate + L-tryptophan + H2O. It participates in amino-acid biosynthesis; L-tryptophan biosynthesis; L-tryptophan from chorismate: step 5/5. In terms of biological role, the beta subunit is responsible for the synthesis of L-tryptophan from indole and L-serine. In Streptococcus pneumoniae (strain JJA), this protein is Tryptophan synthase beta chain.